Reading from the N-terminus, the 696-residue chain is UvrABC system protein B (696 aa).

The region spanning 45–434 (EGIGDGLSYQ…DEVVEQVVRP (390 aa)) is the Helicase ATP-binding domain. 58–65 (GVTGSGKT) contacts ATP. Residues 111–134 (YYDYYQPEAYVPQRDLFIEKDSSV) carry the Beta-hairpin motif. One can recognise a Helicase C-terminal domain in the interval 450–616 (QVDDLLSEIH…GVVKRIKDII (167 aa)). The 36-residue stretch at 647–682 (GKEIKRLEKQMLDHAKNLEFEKAAAVRDQLAKLKSQ) folds into the UVR domain.

Belongs to the UvrB family. Forms a heterotetramer with UvrA during the search for lesions. Interacts with UvrC in an incision complex.

Its subcellular location is the cytoplasm. Its function is as follows. The UvrABC repair system catalyzes the recognition and processing of DNA lesions. A damage recognition complex composed of 2 UvrA and 2 UvrB subunits scans DNA for abnormalities. Upon binding of the UvrA(2)B(2) complex to a putative damaged site, the DNA wraps around one UvrB monomer. DNA wrap is dependent on ATP binding by UvrB and probably causes local melting of the DNA helix, facilitating insertion of UvrB beta-hairpin between the DNA strands. Then UvrB probes one DNA strand for the presence of a lesion. If a lesion is found the UvrA subunits dissociate and the UvrB-DNA preincision complex is formed. This complex is subsequently bound by UvrC and the second UvrB is released. If no lesion is found, the DNA wraps around the other UvrB subunit that will check the other stand for damage. This chain is UvrABC system protein B, found in Ralstonia nicotianae (strain ATCC BAA-1114 / GMI1000) (Ralstonia solanacearum).